Here is a 368-residue protein sequence, read N- to C-terminus: UDP-N-acetylglucosamine--N-acetylmuramyl-(pentapeptide) pyrophosphoryl-undecaprenol N-acetylglucosamine transferase (368 aa).

Residues 10–12 (TGG), N126, S200, I255, and Q300 contribute to the UDP-N-acetyl-alpha-D-glucosamine site.

It belongs to the glycosyltransferase 28 family. MurG subfamily.

It localises to the cell membrane. The enzyme catalyses Mur2Ac(oyl-L-Ala-gamma-D-Glu-L-Lys-D-Ala-D-Ala)-di-trans,octa-cis-undecaprenyl diphosphate + UDP-N-acetyl-alpha-D-glucosamine = beta-D-GlcNAc-(1-&gt;4)-Mur2Ac(oyl-L-Ala-gamma-D-Glu-L-Lys-D-Ala-D-Ala)-di-trans,octa-cis-undecaprenyl diphosphate + UDP + H(+). Its pathway is cell wall biogenesis; peptidoglycan biosynthesis. Its function is as follows. Cell wall formation. Catalyzes the transfer of a GlcNAc subunit on undecaprenyl-pyrophosphoryl-MurNAc-pentapeptide (lipid intermediate I) to form undecaprenyl-pyrophosphoryl-MurNAc-(pentapeptide)GlcNAc (lipid intermediate II). The polypeptide is UDP-N-acetylglucosamine--N-acetylmuramyl-(pentapeptide) pyrophosphoryl-undecaprenol N-acetylglucosamine transferase (Lactobacillus acidophilus (strain ATCC 700396 / NCK56 / N2 / NCFM)).